A 923-amino-acid polypeptide reads, in one-letter code: DNA gyrase subunit A (923 aa).

A Topo IIA-type catalytic domain is found at 34-534 (LPDARDGLKP…SQVDLTIADL (501 aa)). Tyrosine 122 acts as the O-(5'-phospho-DNA)-tyrosine intermediate in catalysis. A GyrA-box motif is present at residues 561–567 (QRRGGKG). The interval 881-923 (ERVQEPSGGDDEDLPEGEEAAESLGESAESESEPAAEAEGNEE) is disordered. 2 stretches are compositionally biased toward acidic residues: residues 888 to 901 (GGDD…EEAA) and 908 to 923 (AESE…GNEE).

This sequence belongs to the type II topoisomerase GyrA/ParC subunit family. Heterotetramer, composed of two GyrA and two GyrB chains. In the heterotetramer, GyrA contains the active site tyrosine that forms a transient covalent intermediate with DNA, while GyrB binds cofactors and catalyzes ATP hydrolysis.

The protein localises to the cytoplasm. It catalyses the reaction ATP-dependent breakage, passage and rejoining of double-stranded DNA.. Its function is as follows. A type II topoisomerase that negatively supercoils closed circular double-stranded (ds) DNA in an ATP-dependent manner to modulate DNA topology and maintain chromosomes in an underwound state. Negative supercoiling favors strand separation, and DNA replication, transcription, recombination and repair, all of which involve strand separation. Also able to catalyze the interconversion of other topological isomers of dsDNA rings, including catenanes and knotted rings. Type II topoisomerases break and join 2 DNA strands simultaneously in an ATP-dependent manner. The polypeptide is DNA gyrase subunit A (Pseudomonas aeruginosa (strain ATCC 15692 / DSM 22644 / CIP 104116 / JCM 14847 / LMG 12228 / 1C / PRS 101 / PAO1)).